The sequence spans 81 residues: MNITKAYVIFFLVVILTNSLSNSDVLASSDIYICVTVIETTKNDVCSTPCTIRYGTFECFHDCILEHYRDGNCINGRCCCK.

The signal sequence occupies residues 1 to 23 (MNITKAYVIFFLVVILTNSLSNS). 4 cysteine pairs are disulfide-bonded: Cys46–Cys80, Cys50–Cys73, Cys59–Cys78, and Cys63–Cys79.

It belongs to the DEFL family.

The protein resides in the secreted. This is Putative defensin-like protein 56 from Arabidopsis thaliana (Mouse-ear cress).